A 316-amino-acid chain; its full sequence is Ribosomal RNA large subunit methyltransferase F (316 aa).

This sequence belongs to the methyltransferase superfamily. METTL16/RlmF family.

The protein localises to the cytoplasm. The catalysed reaction is adenosine(1618) in 23S rRNA + S-adenosyl-L-methionine = N(6)-methyladenosine(1618) in 23S rRNA + S-adenosyl-L-homocysteine + H(+). In terms of biological role, specifically methylates the adenine in position 1618 of 23S rRNA. The protein is Ribosomal RNA large subunit methyltransferase F of Pseudomonas entomophila (strain L48).